The sequence spans 754 residues: Probable galactinol--sucrose galactosyltransferase 1 (754 aa).

The protein belongs to the glycosyl hydrolases 36 family.

It catalyses the reaction alpha-D-galactosyl-(1-&gt;3)-1D-myo-inositol + sucrose = raffinose + myo-inositol. In terms of biological role, transglycosidase operating by a ping-pong reaction mechanism. Involved in the synthesis of raffinose, a major soluble carbohydrate in seeds, roots and tubers. This chain is Probable galactinol--sucrose galactosyltransferase 1 (RFS1), found in Arabidopsis thaliana (Mouse-ear cress).